A 147-amino-acid chain; its full sequence is Cyanate hydratase (147 aa).

Catalysis depends on residues Arg-88, Glu-91, and Ser-114.

The protein belongs to the cyanase family.

It carries out the reaction cyanate + hydrogencarbonate + 3 H(+) = NH4(+) + 2 CO2. Catalyzes the reaction of cyanate with bicarbonate to produce ammonia and carbon dioxide. In Parasynechococcus marenigrum (strain WH8102), this protein is Cyanate hydratase.